A 186-amino-acid chain; its full sequence is Ribosome-recycling factor (186 aa).

The protein belongs to the RRF family.

It localises to the cytoplasm. Functionally, responsible for the release of ribosomes from messenger RNA at the termination of protein biosynthesis. May increase the efficiency of translation by recycling ribosomes from one round of translation to another. The sequence is that of Ribosome-recycling factor from Methylocella silvestris (strain DSM 15510 / CIP 108128 / LMG 27833 / NCIMB 13906 / BL2).